Here is a 245-residue protein sequence, read N- to C-terminus: Ribonuclease 3 (245 aa).

The RNase III domain maps to 17–146; the sequence is FTDKMKSLGL…FVGALYLDQG (130 aa). Mg(2+) is bound at residue Glu59. Residue Asp63 is part of the active site. Mg(2+) is bound by residues Asp132 and Glu135. Residue Glu135 is part of the active site. Positions 172 to 241 constitute a DRBM domain; it reads DFKTQFQEYV…AEQAYKLMKN (70 aa).

It belongs to the ribonuclease III family. In terms of assembly, homodimer. Requires Mg(2+) as cofactor.

It is found in the cytoplasm. It carries out the reaction Endonucleolytic cleavage to 5'-phosphomonoester.. Its function is as follows. Digests double-stranded RNA. Involved in the processing of primary rRNA transcript to yield the immediate precursors to the large and small rRNAs (23S and 16S). Processes some mRNAs, and tRNAs when they are encoded in the rRNA operon. Processes pre-crRNA and tracrRNA of type II CRISPR loci if present in the organism. The sequence is that of Ribonuclease 3 from Staphylococcus epidermidis (strain ATCC 35984 / DSM 28319 / BCRC 17069 / CCUG 31568 / BM 3577 / RP62A).